We begin with the raw amino-acid sequence, 436 residues long: Calcium/calmodulin-regulated receptor-like kinase 2 (436 aa).

Residues 7–34 (LVVIGISVGLALGLLLALLLFFAIKWYY) traverse the membrane as a helical segment. Residues 65 to 88 (DRANTESSQPPENGAPTQHQPWWN) are disordered. A compositionally biased stretch (polar residues) spans 69–88 (TESSQPPENGAPTQHQPWWN). One can recognise a Protein kinase domain in the interval 114-375 (QNFTTVLGQG…PSIGEVTQFI (262 aa)). ATP contacts are provided by residues 120–128 (LGQGSFGPV) and lysine 142. At tyrosine 187 the chain carries Phosphotyrosine. Aspartate 239 functions as the Proton acceptor in the catalytic mechanism. Threonine 276 carries the phosphothreonine modification. A Phosphotyrosine modification is found at tyrosine 284.

This sequence belongs to the protein kinase superfamily. Ser/Thr protein kinase family.

It localises to the cell membrane. The catalysed reaction is L-seryl-[protein] + ATP = O-phospho-L-seryl-[protein] + ADP + H(+). The enzyme catalyses L-threonyl-[protein] + ATP = O-phospho-L-threonyl-[protein] + ADP + H(+). This Arabidopsis thaliana (Mouse-ear cress) protein is Calcium/calmodulin-regulated receptor-like kinase 2.